A 1437-amino-acid polypeptide reads, in one-letter code: Protein CC2D2B (1437 aa).

The chain is Protein CC2D2B from Homo sapiens (Human).